The primary structure comprises 342 residues: tRNA N6-adenosine threonylcarbamoyltransferase (342 aa).

Fe cation contacts are provided by His-120 and His-124. Substrate contacts are provided by residues 142-146, Asp-175, Gly-188, Asp-192, and Asn-281; that span reads VVSGG. Asp-310 lines the Fe cation pocket.

Belongs to the KAE1 / TsaD family. The cofactor is Fe(2+).

The protein resides in the cytoplasm. It carries out the reaction L-threonylcarbamoyladenylate + adenosine(37) in tRNA = N(6)-L-threonylcarbamoyladenosine(37) in tRNA + AMP + H(+). Required for the formation of a threonylcarbamoyl group on adenosine at position 37 (t(6)A37) in tRNAs that read codons beginning with adenine. Is involved in the transfer of the threonylcarbamoyl moiety of threonylcarbamoyl-AMP (TC-AMP) to the N6 group of A37, together with TsaE and TsaB. TsaD likely plays a direct catalytic role in this reaction. The sequence is that of tRNA N6-adenosine threonylcarbamoyltransferase from Geobacillus thermodenitrificans (strain NG80-2).